The chain runs to 416 residues: Probable carboxypeptidase An18g06210 (416 aa).

Residues 1–16 (MKSPISLLAAVGVASA) form the signal peptide. 3 N-linked (GlcNAc...) asparagine glycosylation sites follow: Asn-54, Asn-70, and Asn-129. Asp-142 serves as a coordination point for Zn(2+). Glu-174 serves as the catalytic Proton acceptor. Glu-175 is a Zn(2+) binding site. N-linked (GlcNAc...) asparagine glycosylation is found at Asn-187 and Asn-319.

The protein belongs to the peptidase M20A family. It depends on Zn(2+) as a cofactor.

It localises to the secreted. The sequence is that of Probable carboxypeptidase An18g06210 from Aspergillus niger (strain ATCC MYA-4892 / CBS 513.88 / FGSC A1513).